A 1099-amino-acid polypeptide reads, in one-letter code: ATP-dependent helicase/deoxyribonuclease subunit B (1099 aa).

Residues C766, C1056, C1059, and C1065 each contribute to the [4Fe-4S] cluster site.

This sequence belongs to the helicase family. AddB/RexB type 2 subfamily. Heterodimer of AddA and RexB. Requires Mg(2+) as cofactor. [4Fe-4S] cluster is required as a cofactor.

Its function is as follows. The heterodimer acts as both an ATP-dependent DNA helicase and an ATP-dependent, dual-direction single-stranded exonuclease. Recognizes the chi site generating a DNA molecule suitable for the initiation of homologous recombination. This subunit has 5' -&gt; 3' nuclease activity but not helicase activity. The polypeptide is ATP-dependent helicase/deoxyribonuclease subunit B (Lactococcus lactis subsp. lactis (strain IL1403) (Streptococcus lactis)).